The primary structure comprises 246 residues: Ribonuclease 3 (246 aa).

Residues alanine 8–glycine 137 form the RNase III domain. Glutamate 50 lines the Mg(2+) pocket. The active site involves aspartate 54. Aspartate 123 and glutamate 126 together coordinate Mg(2+). Glutamate 126 is a catalytic residue. One can recognise a DRBM domain in the interval aspartate 164–glycine 233. The disordered stretch occupies residues serine 212–arginine 246.

This sequence belongs to the ribonuclease III family. In terms of assembly, homodimer. Mg(2+) serves as cofactor.

It is found in the cytoplasm. It catalyses the reaction Endonucleolytic cleavage to 5'-phosphomonoester.. Digests double-stranded RNA. Involved in the processing of primary rRNA transcript to yield the immediate precursors to the large and small rRNAs (23S and 16S). Processes some mRNAs, and tRNAs when they are encoded in the rRNA operon. Processes pre-crRNA and tracrRNA of type II CRISPR loci if present in the organism. The sequence is that of Ribonuclease 3 from Desulforamulus reducens (strain ATCC BAA-1160 / DSM 100696 / MI-1) (Desulfotomaculum reducens).